The sequence spans 508 residues: Protein MGF 505-9R (508 aa).

ANK repeat units follow at residues 54-83, 253-282, and 313-343; these read SINL…NLHY, QVDT…RKTV, and IIKK…KINL.

This sequence belongs to the asfivirus MGF 505 family.

Its function is as follows. Plays a role in virus cell tropism, and may be required for efficient virus replication in macrophages. In Ornithodoros (relapsing fever ticks), this protein is Protein MGF 505-9R.